The following is a 259-amino-acid chain: uncharacterized protein (259 aa).

Belongs to the BtpA family.

This is an uncharacterized protein from Pyrococcus abyssi (strain GE5 / Orsay).